The chain runs to 127 residues: Holo-[acyl-carrier-protein] synthase (127 aa).

Residues Asp-9 and Glu-58 each contribute to the Mg(2+) site.

This sequence belongs to the P-Pant transferase superfamily. AcpS family. Mg(2+) is required as a cofactor.

The protein localises to the cytoplasm. It catalyses the reaction apo-[ACP] + CoA = holo-[ACP] + adenosine 3',5'-bisphosphate + H(+). Functionally, transfers the 4'-phosphopantetheine moiety from coenzyme A to a Ser of acyl-carrier-protein. This chain is Holo-[acyl-carrier-protein] synthase, found in Shewanella oneidensis (strain ATCC 700550 / JCM 31522 / CIP 106686 / LMG 19005 / NCIMB 14063 / MR-1).